The chain runs to 205 residues: Gap junction epsilon-1 protein (205 aa).

Over 1-22 the chain is Cytoplasmic; the sequence is MSLNYIKNFYEGCVKPPTVIGQ. A helical transmembrane segment spans residues 23–43; it reads FHTLFFGSVRMFFLGVLGFAV. Residues 44–74 lie on the Extracellular side of the membrane; the sequence is YGNEALHFSCDPDKREINLFCYNQFRPITPQ. 2 disulfide bridges follow: Cys-53/Cys-161 and Cys-64/Cys-147. A helical transmembrane segment spans residues 75–95; that stretch reads VFWALQLVIVLLPGAIFHLYA. Residues 96–111 are Cytoplasmic-facing; that stretch reads ACKSINQDCILQKPVY. A helical transmembrane segment spans residues 112 to 132; that stretch reads TVIYVLSVLLRISLEVFAFWL. The Extracellular portion of the chain corresponds to 133-170; the sequence is QIHLFGFQVKPIYLCDTESLGKKPNILKCMVPEHFEKT. The chain crosses the membrane as a helical span at residues 171-191; it reads IFLIAMYTFTVITMVLCVAEV. Residues 192 to 205 lie on the Cytoplasmic side of the membrane; sequence FEIIFRRSCFLFKR.

Belongs to the connexin family. Beta-type (group I) subfamily. As to quaternary structure, a connexon is composed of a hexamer of connexins. As to expression, highly expressed in lens, where it is mainly found in lens fibers and to a lesser extent in lens epithelium. Weakly expressed in retina. Not detected in other tissues tested.

The protein resides in the cell membrane. In terms of biological role, mediates calcium-independent ATP release, suggesting activity as a hemichannel. Does not form functional gap junctions. May play a non-essential role in eye lens development. The polypeptide is Gap junction epsilon-1 protein (Mus musculus (Mouse)).